The primary structure comprises 117 residues: Multidrug resistance protein EbrB (117 aa).

The next 4 helical transmembrane spans lie at 3-23 (GLLYLALAIVSEVFGSTMLKL), 31-51 (WPIGGVIAGFLSAFTFLSFSL), 59-79 (AYATWSGVGTALTAIVGFLLF), and 81-101 (ETISLKGVFGLTLVIAGVVVL).

Belongs to the drug/metabolite transporter (DMT) superfamily. Small multidrug resistance (SMR) (TC 2.A.7.1) family. EbrA/EbrB subfamily. In terms of assembly, the efflux pump is composed of EbrA and EbrB.

The protein localises to the cell membrane. Functionally, part of a multidrug efflux pump. Confers resistance to cationic lipophilic dyes such as ethidium bromide, acriflavine, pyronine Y and safranin O. The efflux is probably coupled to an influx of protons. This chain is Multidrug resistance protein EbrB (ebrB), found in Bacillus atrophaeus.